Reading from the N-terminus, the 538-residue chain is Syncytin-1 (538 aa).

A signal peptide spans 1–20 (MALPYHIFLFTVLLPSFTLT). Over 21 to 443 (APPPCRCMTS…NTGPWGLLSQ (423 aa)) the chain is Extracellular. The N-linked (GlcNAc...) asparagine glycan is linked to Asn169. Residues 186-189 (CWIC) carry the CXXC motif. 3 cysteine pairs are disulfide-bonded: Cys186–Cys189, Cys186–Cys405, and Cys397–Cys404. N-linked (GlcNAc...) asparagine glycosylation is found at Asn208, Asn214, Asn234, Asn242, and Asn281. The tract at residues 320-340 (ILPFVIGAGVLGALGTGIGGI) is fusion peptide. The tract at residues 380-396 (LQNRRALDLLTAERGGT) is immunosuppression. Positions 397 to 405 (CLFLGEECC) match the CX6CC motif. A glycan (N-linked (GlcNAc...) asparagine) is linked at Asn409. Residues 444 to 464 (WMPWILPFLGPLAAIILLLLF) traverse the membrane as a helical segment. The essential for the fusiogenic function stretch occupies residues 465 to 484 (GPCIFNLLVNFVSSRIEAVK). Topologically, residues 465-538 (GPCIFNLLVN…LLRPNSAGSS (74 aa)) are cytoplasmic. A disordered region spans residues 496 to 538 (KIYRRPLDRPASPRSDVNDIKGTPPEEILTAQPLLRPNSAGSS).

Belongs to the gamma type-C retroviral envelope protein family. HERV class-I W env subfamily. As to quaternary structure, the mature envelope protein (Env) consists of a trimer of SU-TM heterodimers attached probably by a labile interchain disulfide bond. Interacts with the C-type lectin CD209/DC-SIGN. Post-translationally, specific enzymatic cleavages in vivo yield mature proteins. Envelope glycoproteins are synthesized as an inactive precursor that is heavily N-glycosylated and processed likely by furin in the Golgi to yield the mature SU and TM proteins. The cleavage site between SU and TM requires the minimal sequence [KR]-X-[KR]-R. The CXXC motif is highly conserved across a broad range of retroviral envelope proteins. It is thought to participate in the formation of a labile disulfide bond possibly with the CX6CC motif present in the transmembrane protein.

It localises to the cell membrane. It is found in the virion. Its function is as follows. This endogenous retroviral envelope protein has retained its original fusogenic properties and participates in trophoblast fusion and the formation of a syncytium during placenta morphogenesis. May recognize and induce fusion through binding of SLC1A4 and SLC1A5. In terms of biological role, endogenous envelope proteins may have kept, lost or modified their original function during evolution. Retroviral envelope proteins mediate receptor recognition and membrane fusion during early infection. The surface protein (SU) mediates receptor recognition, while the transmembrane protein (TM) acts as a class I viral fusion protein. The protein may have at least 3 conformational states: pre-fusion native state, pre-hairpin intermediate state, and post-fusion hairpin state. During viral and target cell membrane fusion, the coiled coil regions (heptad repeats) assume a trimer-of-hairpins structure, positioning the fusion peptide in close proximity to the C-terminal region of the ectodomain. The formation of this structure appears to drive apposition and subsequent fusion of membranes. The protein is Syncytin-1 (ERVW-1) of Pan troglodytes (Chimpanzee).